We begin with the raw amino-acid sequence, 392 residues long: Putative glutamate--cysteine ligase 2 (392 aa).

Residues 347 to 367 (AARKHGAAPEPGTRTRGDDGV) form a disordered region.

Belongs to the glutamate--cysteine ligase type 2 family. YbdK subfamily.

It catalyses the reaction L-cysteine + L-glutamate + ATP = gamma-L-glutamyl-L-cysteine + ADP + phosphate + H(+). ATP-dependent carboxylate-amine ligase which exhibits weak glutamate--cysteine ligase activity. The polypeptide is Putative glutamate--cysteine ligase 2 (Corynebacterium jeikeium (strain K411)).